A 352-amino-acid chain; its full sequence is Phosphoribosylformylglycinamidine cyclo-ligase (352 aa).

Belongs to the AIR synthase family.

Its subcellular location is the cytoplasm. It carries out the reaction 2-formamido-N(1)-(5-O-phospho-beta-D-ribosyl)acetamidine + ATP = 5-amino-1-(5-phospho-beta-D-ribosyl)imidazole + ADP + phosphate + H(+). It functions in the pathway purine metabolism; IMP biosynthesis via de novo pathway; 5-amino-1-(5-phospho-D-ribosyl)imidazole from N(2)-formyl-N(1)-(5-phospho-D-ribosyl)glycinamide: step 2/2. This chain is Phosphoribosylformylglycinamidine cyclo-ligase, found in Teredinibacter turnerae (strain ATCC 39867 / T7901).